Here is a 1827-residue protein sequence, read N- to C-terminus: Laminin subunit beta-4 (1827 aa).

An N-terminal signal peptide occupies residues 1–21 (MLLRLELSALLLLLIAAPVRL). The region spanning 26-266 (VGNSCYPNLG…ALYEMVVRGS (241 aa)) is the Laminin N-terminal domain. Residue Asn231 is glycosylated (N-linked (GlcNAc...) asparagine). 19 disulfide bridges follow: Cys267–Cys276, Cys269–Cys297, Cys299–Cys308, Cys311–Cys331, Cys334–Cys343, Cys336–Cys361, Cys364–Cys373, Cys376–Cys394, Cys397–Cys410, Cys399–Cys417, Cys419–Cys428, Cys431–Cys446, Cys449–Cys463, Cys451–Cys470, Cys472–Cys481, Cys484–Cys498, Cys501–Cys513, Cys503–Cys520, and Cys522–Cys531. Laminin EGF-like domains lie at 267–333 (CFCN…VCKR), 334–396 (CNCH…ACIP), 397–448 (CDCD…GCQL), and 449–500 (CRCN…GCIP). The region spanning 501–544 (CDCDIGGALKTECSSVDGQCKCRPNMVGQKCNDPAPGYFLAPLD) is the Laminin EGF-like 5; truncated domain. Residues 540 to 847 (LAPLDFYIYE…LIGSMSAFIH (308 aa)) enclose the Laminin IV type B domain. Cystine bridges form between Cys853-Cys865, Cys855-Cys872, Cys874-Cys883, Cys886-Cys898, Cys901-Cys913, Cys903-Cys920, Cys922-Cys931, Cys934-Cys944, Cys947-Cys956, Cys949-Cys963, Cys966-Cys975, Cys978-Cys992, Cys995-Cys1011, Cys997-Cys1022, Cys1024-Cys1033, Cys1036-Cys1051, Cys1054-Cys1068, Cys1056-Cys1075, Cys1078-Cys1087, Cys1090-Cys1103, Cys1106-Cys1126, Cys1108-Cys1133, Cys1135-Cys1144, Cys1147-Cys1160, Cys1163-Cys1175, Cys1165-Cys1182, Cys1184-Cys1193, Cys1196-Cys1208, Cys1211-Cys1223, Cys1213-Cys1230, Cys1232-Cys1241, and Cys1244-Cys1255. 8 Laminin EGF-like domains span residues 853 to 900 (CNCH…GCSP), 901 to 946 (CDCD…LCRR), 947 to 994 (CQCN…PCEP), 995 to 1053 (CLCP…RCKE), 1054 to 1105 (CCCN…DCKE), 1106 to 1162 (CSCD…GCQP), 1163 to 1210 (CNCN…QCMF), and 1211 to 1257 (CDCN…ACEP). Asn1001 carries an N-linked (GlcNAc...) asparagine glycan. The tract at residues 1258–1449 (CHACNHLWEK…LSAANINEEV (192 aa)) is domain II. 2 coiled-coil regions span residues 1294-1335 (ELQH…EIID) and 1385-1449 (NKIK…NEEV). The N-linked (GlcNAc...) asparagine glycan is linked to Asn1329. Residues 1450–1476 (CGAPGDAECEKAKCGGALCGKCGGPDC) are domain alpha. The interval 1477–1827 (TGSLPISLNA…KVQRYNLCSP (351 aa)) is domain I. N-linked (GlcNAc...) asparagine glycans are attached at residues Asn1485, Asn1496, Asn1513, Asn1533, Asn1599, Asn1629, Asn1644, Asn1672, Asn1686, Asn1702, Asn1726, Asn1745, Asn1750, and Asn1761. Coiled-coil stretches lie at residues 1485 to 1554 (NASK…EKVK) and 1584 to 1820 (DEIK…DKVQ).

In terms of assembly, laminin is a complex glycoprotein, consisting of three different polypeptide chains (alpha, beta, gamma), which are bound to each other by disulfide bonds into a cross-shaped molecule comprising one long and three short arms with globules at each end.

The protein resides in the secreted. It localises to the extracellular space. Its subcellular location is the extracellular matrix. It is found in the basement membrane. Its function is as follows. Binding to cells via a high affinity receptor, laminin is thought to mediate the attachment, migration and organization of cells into tissues during embryonic development by interacting with other extracellular matrix components. Positively regulates apical-basal distribution of Muller glia cells in the retina. In Danio rerio (Zebrafish), this protein is Laminin subunit beta-4 (lamb4).